The sequence spans 193 residues: Adenine phosphoribosyltransferase (193 aa).

It belongs to the purine/pyrimidine phosphoribosyltransferase family. As to quaternary structure, homodimer.

It localises to the cytoplasm. It carries out the reaction AMP + diphosphate = 5-phospho-alpha-D-ribose 1-diphosphate + adenine. It participates in purine metabolism; AMP biosynthesis via salvage pathway; AMP from adenine: step 1/1. Catalyzes a salvage reaction resulting in the formation of AMP, that is energically less costly than de novo synthesis. The protein is Adenine phosphoribosyltransferase of Bifidobacterium animalis subsp. lactis (strain AD011).